We begin with the raw amino-acid sequence, 102 residues long: Small ribosomal subunit protein uS10 (102 aa).

Belongs to the universal ribosomal protein uS10 family. As to quaternary structure, part of the 30S ribosomal subunit.

Functionally, involved in the binding of tRNA to the ribosomes. The polypeptide is Small ribosomal subunit protein uS10 (Bacillus thuringiensis (strain Al Hakam)).